The sequence spans 180 residues: Bifunctional protein PyrR (180 aa).

A PRPP-binding motif is present at residues 101 to 113 (VILVDDVLYTGRT).

The protein belongs to the purine/pyrimidine phosphoribosyltransferase family. PyrR subfamily. As to quaternary structure, homodimer and homohexamer; in equilibrium.

The enzyme catalyses UMP + diphosphate = 5-phospho-alpha-D-ribose 1-diphosphate + uracil. Regulates transcriptional attenuation of the pyrimidine nucleotide (pyr) operon by binding in a uridine-dependent manner to specific sites on pyr mRNA. This disrupts an antiterminator hairpin in the RNA and favors formation of a downstream transcription terminator, leading to a reduced expression of downstream genes. In terms of biological role, also displays a weak uracil phosphoribosyltransferase activity which is not physiologically significant. The sequence is that of Bifunctional protein PyrR from Bacillus cytotoxicus (strain DSM 22905 / CIP 110041 / 391-98 / NVH 391-98).